The chain runs to 762 residues: 5-methyltetrahydropteroyltriglutamate--homocysteine methyltransferase (762 aa).

5-methyltetrahydropteroyltri-L-glutamate-binding positions include 17 to 20 and K111; that span reads REWK. Residues 435–437 and E488 contribute to the L-homocysteine site; that span reads IGS. L-methionine is bound by residues 435–437 and E488; that span reads IGS. 5-methyltetrahydropteroyltri-L-glutamate-binding positions include 519-520 and W565; that span reads RC. An L-homocysteine-binding site is contributed by D603. D603 provides a ligand contact to L-methionine. E609 lines the 5-methyltetrahydropteroyltri-L-glutamate pocket. Residues H645, C647, and E669 each coordinate Zn(2+). The Proton donor role is filled by H698. Position 730 (C730) interacts with Zn(2+).

Belongs to the vitamin-B12 independent methionine synthase family. Zn(2+) serves as cofactor.

It carries out the reaction 5-methyltetrahydropteroyltri-L-glutamate + L-homocysteine = tetrahydropteroyltri-L-glutamate + L-methionine. It functions in the pathway amino-acid biosynthesis; L-methionine biosynthesis via de novo pathway; L-methionine from L-homocysteine (MetE route): step 1/1. Its function is as follows. Catalyzes the transfer of a methyl group from 5-methyltetrahydrofolate to homocysteine resulting in methionine formation. This chain is 5-methyltetrahydropteroyltriglutamate--homocysteine methyltransferase, found in Bacillus cereus (strain G9842).